The chain runs to 201 residues: ATP synthase subunit delta (201 aa).

The protein belongs to the ATPase delta chain family. F-type ATPases have 2 components, F(1) - the catalytic core - and F(0) - the membrane proton channel. F(1) has five subunits: alpha(3), beta(3), gamma(1), delta(1), epsilon(1). F(0) has three main subunits: a(1), b(2) and c(10-14). The alpha and beta chains form an alternating ring which encloses part of the gamma chain. F(1) is attached to F(0) by a central stalk formed by the gamma and epsilon chains, while a peripheral stalk is formed by the delta and b chains.

Its subcellular location is the cell inner membrane. In terms of biological role, f(1)F(0) ATP synthase produces ATP from ADP in the presence of a proton or sodium gradient. F-type ATPases consist of two structural domains, F(1) containing the extramembraneous catalytic core and F(0) containing the membrane proton channel, linked together by a central stalk and a peripheral stalk. During catalysis, ATP synthesis in the catalytic domain of F(1) is coupled via a rotary mechanism of the central stalk subunits to proton translocation. This protein is part of the stalk that links CF(0) to CF(1). It either transmits conformational changes from CF(0) to CF(1) or is implicated in proton conduction. In Xanthobacter autotrophicus (strain ATCC BAA-1158 / Py2), this protein is ATP synthase subunit delta.